The chain runs to 448 residues: Arginine synthetase ArcE (448 aa).

As to quaternary structure, probably forms homotetramers and higher assemblies of tetramers. Mg(2+) is required as a cofactor.

It catalyses the reaction L-arginine + ADP + phosphate + H(+) = L-citrulline + NH4(+) + ATP. It functions in the pathway amino-acid biosynthesis; L-proline biosynthesis. It participates in amino-acid degradation; L-arginine degradation. Its pathway is amino-acid biosynthesis; L-arginine biosynthesis. Its function is as follows. Arginine deiminase involved in an arginine synthetase pathway, which provides citrulline and ornithine, the precursors for proline biosynthesis. Catalyzes the conversion of L-arginine to citrulline while conserving the energy of arginine deimination to generate ATP from ADP and free phosphate. Is specific toward L-arginine and cannot use D-arginine, agmatine, guanidine, L-alanine-L-arginine dipeptide and L-arginine-L-alanine dipeptide. Can also use CDP, GDP or UDP, with lower activity (38%, 8.4% and 13.3%, respectively). The enzyme can also catalyze the reverse reaction: the ATP-dependent generation of arginine from citrulline in a single reaction by using free ammonia, without the requirement of aspartic acid. In vivo, most likely functions in the arginine catabolism to produce citrulline for proline biosynthesis while also generating ATP, but it can also contribute to arginine biosynthesis when the necessary precursors such as citrulline are abundant. The polypeptide is Arginine synthetase ArcE (Thermococcus kodakarensis (strain ATCC BAA-918 / JCM 12380 / KOD1) (Pyrococcus kodakaraensis (strain KOD1))).